Reading from the N-terminus, the 151-residue chain is Ribosomal RNA large subunit methyltransferase H (151 aa).

Residues leucine 73, glycine 100, and 119 to 124 each bind S-adenosyl-L-methionine; that span reads LSDLTM.

Belongs to the RNA methyltransferase RlmH family. In terms of assembly, homodimer.

It localises to the cytoplasm. The catalysed reaction is pseudouridine(1915) in 23S rRNA + S-adenosyl-L-methionine = N(3)-methylpseudouridine(1915) in 23S rRNA + S-adenosyl-L-homocysteine + H(+). In terms of biological role, specifically methylates the pseudouridine at position 1915 (m3Psi1915) in 23S rRNA. In Aliarcobacter butzleri (strain RM4018) (Arcobacter butzleri), this protein is Ribosomal RNA large subunit methyltransferase H.